The primary structure comprises 393 residues: Probable acetyl-CoA acetyltransferase (393 aa).

T2 is a propeptide (removed; alternate). Catalysis depends on C88, which acts as the Acyl-thioester intermediate. Residues H349 and C379 each act as proton acceptor in the active site.

The protein belongs to the thiolase-like superfamily. Thiolase family.

The catalysed reaction is 2 acetyl-CoA = acetoacetyl-CoA + CoA. This Mycobacterium tuberculosis (strain ATCC 25618 / H37Rv) protein is Probable acetyl-CoA acetyltransferase (fadA4).